Consider the following 371-residue polypeptide: Putative 8-amino-7-oxononanoate synthase (371 aa).

Substrate is bound at residue Arg21. 108–109 (GY) is a pyridoxal 5'-phosphate binding site. His133 contacts substrate. Residues Ser180, 205–208 (DDAH), and 234–237 (TLSK) contribute to the pyridoxal 5'-phosphate site. Lys237 is modified (N6-(pyridoxal phosphate)lysine). Thr333 is a substrate binding site.

Belongs to the class-II pyridoxal-phosphate-dependent aminotransferase family. BioF subfamily. In terms of assembly, homodimer. Pyridoxal 5'-phosphate is required as a cofactor.

The catalysed reaction is 6-carboxyhexanoyl-[ACP] + L-alanine + H(+) = (8S)-8-amino-7-oxononanoate + holo-[ACP] + CO2. The protein operates within cofactor biosynthesis; biotin biosynthesis. Its function is as follows. Catalyzes the decarboxylative condensation of pimeloyl-[acyl-carrier protein] and L-alanine to produce 8-amino-7-oxononanoate (AON), [acyl-carrier protein], and carbon dioxide. This is Putative 8-amino-7-oxononanoate synthase (bioF) from Bacillus subtilis subsp. natto.